We begin with the raw amino-acid sequence, 73 residues long: uncharacterized protein (73 aa).

Residues 8-63 (MLTRIKSVYMFIQEKGLVTTQELVDEFGITPRTIQRDLNVLAYNDLVHSPSRGKWE) form the HTH deoR-type domain. A DNA-binding region (H-T-H motif) is located at residues 25–44 (VTTQELVDEFGITPRTIQRD).

This is an uncharacterized protein from Bacillus subtilis (strain 168).